We begin with the raw amino-acid sequence, 552 residues long: Protoheme IX farnesyltransferase, mitochondrial (552 aa).

The segment at 118–185 (AADIPPSTST…PSGEIPPDAS (68 aa)) is disordered. Positions 150-168 (EQAASASSNAPSEAAQTTP) are enriched in low complexity. 8 consecutive transmembrane segments (helical) span residues 215-235 (LTML…VPDF), 245-267 (LSPL…ANAL), 296-316 (AAVC…QFGV), 318-338 (PTVA…YTPL), 346-366 (TWVG…AAAG), 387-407 (AGGW…FMAL), 441-461 (VFVP…SFAV), and 487-507 (ARGL…LALL).

Belongs to the UbiA prenyltransferase family.

It is found in the mitochondrion membrane. It catalyses the reaction heme b + (2E,6E)-farnesyl diphosphate + H2O = Fe(II)-heme o + diphosphate. Converts protoheme IX and farnesyl diphosphate to heme O. This chain is Protoheme IX farnesyltransferase, mitochondrial (COX10), found in Pyricularia oryzae (strain 70-15 / ATCC MYA-4617 / FGSC 8958) (Rice blast fungus).